Here is an 82-residue protein sequence, read N- to C-terminus: Large ribosomal subunit protein bL31B (82 aa).

This sequence belongs to the bacterial ribosomal protein bL31 family. Type B subfamily. Part of the 50S ribosomal subunit.

This is Large ribosomal subunit protein bL31B from Amoebophilus asiaticus (strain 5a2).